We begin with the raw amino-acid sequence, 345 residues long: DNA N(6)-methyladenine demethylase ALKBH1A (345 aa).

Residues W179 and 186-188 contribute to the substrate site; that span reads FDW. Positions 225-345 constitute a Fe2OG dioxygenase domain; sequence RPEGAIVNYF…RININIRQVF (121 aa). 232 to 234 lines the 2-oxoglutarate pocket; sequence NYF. Fe cation contacts are provided by H243, D245, and H299. 2-oxoglutarate is bound at residue 336 to 342; that stretch reads RININIR.

This sequence belongs to the alkB family. The cofactor is Fe(2+). In terms of tissue distribution, mostly expressed in siliques, to a lower extent in roots, seedlings and rosette leaves, but barely in cauline leaves, stems and flowers.

The protein localises to the nucleus. The protein resides in the cytoplasm. The catalysed reaction is an N(6)-methyl-2'-deoxyadenosine in DNA + 2-oxoglutarate + O2 = a 2'-deoxyadenosine in DNA + formaldehyde + succinate + CO2. Dioxygenase that catalyzes DNA N(6)-methyladenine (6 mA) demethylation to modulate gene expression and regulate seed germination. This Arabidopsis thaliana (Mouse-ear cress) protein is DNA N(6)-methyladenine demethylase ALKBH1A.